The chain runs to 188 residues: Scytalone dehydratase (188 aa).

Residues Y27, Y47, and F50 each coordinate substrate. Residues H82 and H107 contribute to the active site. A substrate-binding site is contributed by N128.

Belongs to the scytalone dehydratase family. Homotrimer. Each subunit contains an active site, located in the central part of the hydrophobic core of the monomer, which functions independently.

The protein resides in the endosome. It catalyses the reaction scytalone = 1,3,8-trihydroxynaphthalene + H2O. Its pathway is pigment biosynthesis; melanin biosynthesis. Its activity is regulated as follows. Carpropamid acts as an efficient inhibitor of scytalone dehydratase activity. Its function is as follows. Scytalone dehydratase; part of the gene cluster that mediates the biosynthesis of dihydroxynaphthalene (DHN)-melanin, a bluish-green pigment and a structural component of the conidial wall. Within the pathway, catalyzes the dehydration of scytalone as well as of vermelone. This Colletotrichum orbiculare (strain 104-T / ATCC 96160 / CBS 514.97 / LARS 414 / MAFF 240422) (Cucumber anthracnose fungus) protein is Scytalone dehydratase.